A 552-amino-acid chain; its full sequence is L-ascorbate oxidase (552 aa).

2 consecutive Plastocyanin-like domains span residues 1–122 and 134–300; these read SQIR…LIVD and DGEI…NYLP. 3 disulfides stabilise this stretch: Cys19-Cys201, Cys81-Cys538, and Cys180-Cys193. Cu cation-binding residues include His60 and His62. Asn92 carries N-linked (GlcNAc...) asparagine glycosylation. Residues His104 and His106 each contribute to the Cu cation site. Residues Asn325 and Asn440 are each glycosylated (N-linked (GlcNAc...) asparagine). Positions 344 to 523 constitute a Plastocyanin-like 3 domain; that stretch reads NRRIFLLNTQ…HMGMGVVFAE (180 aa). His445, His448, His450, His506, Cys507, His508, His512, and Met517 together coordinate Cu cation.

It belongs to the multicopper oxidase family. Dimer. It depends on Cu cation as a cofactor.

It is found in the secreted. The enzyme catalyses 4 L-ascorbate + O2 = 4 monodehydro-L-ascorbate radical + 2 H2O. May be involved in a redox system involving ascorbic acid. The protein is L-ascorbate oxidase of Cucurbita pepo var. melopepo (Zucchini).